The following is a 481-amino-acid chain: Glutamyl-tRNA(Gln) amidotransferase subunit A (481 aa).

Catalysis depends on charge relay system residues lysine 79 and serine 154. Positions 136–157 (SAFGATKNPRNPEHVPGGSSGG) are disordered. Serine 178 (acyl-ester intermediate) is an active-site residue.

Belongs to the amidase family. GatA subfamily. In terms of assembly, heterotrimer of A, B and C subunits.

The enzyme catalyses L-glutamyl-tRNA(Gln) + L-glutamine + ATP + H2O = L-glutaminyl-tRNA(Gln) + L-glutamate + ADP + phosphate + H(+). Functionally, allows the formation of correctly charged Gln-tRNA(Gln) through the transamidation of misacylated Glu-tRNA(Gln) in organisms which lack glutaminyl-tRNA synthetase. The reaction takes place in the presence of glutamine and ATP through an activated gamma-phospho-Glu-tRNA(Gln). This Lachnospira eligens (strain ATCC 27750 / DSM 3376 / VPI C15-48 / C15-B4) (Eubacterium eligens) protein is Glutamyl-tRNA(Gln) amidotransferase subunit A.